The following is a 457-amino-acid chain: Flavin-containing monooxygenase FMO GS-OX2 (457 aa).

Residue 17–22 coordinates FAD; the sequence is GAGAAG. Residue 211 to 216 participates in NADP(+) binding; sequence GNFASG.

Belongs to the FMO family.

It carries out the reaction a (Z)-omega-(methylsulfanyl)-N-sulfo-alkylhydroximate S-glucoside + NADPH + O2 + H(+) = a (Z)-omega-(methylsulfinyl)-alkyl-glucosinolate + NADP(+) + H2O. Catalyzes the conversion of methylthioalkyl glucosinolates of any chain length into methylsulfinylalkyl glucosinolates. In Arabidopsis thaliana (Mouse-ear cress), this protein is Flavin-containing monooxygenase FMO GS-OX2 (FMOGS-OX2).